The sequence spans 91 residues: Large ribosomal subunit protein bL31B (91 aa).

Belongs to the bacterial ribosomal protein bL31 family. Type B subfamily. As to quaternary structure, part of the 50S ribosomal subunit.

The protein is Large ribosomal subunit protein bL31B of Neisseria gonorrhoeae (strain NCCP11945).